The chain runs to 235 residues: MSVISMKQLLEAGVHFGHQTRRWNPKMAPYIFTERNGIYIIDLQQTVEKLEQAYEFVKKLAMEGGTILFVGTKKQAQDSIKEEAERCGMFYVNQRWLGGTLTNFKTIRGRIQRLKELKKMEEDGTFDVLPKKEVIKLRKEKERLQKFLGGIENMESLPSALFIVDPKKEAIAVAEARSLEIPIVAIVDTNCDPELIDYPIPGNDDAIRAVKLITSKIADAVIEGNQGEQFAASEE.

This sequence belongs to the universal ribosomal protein uS2 family.

This is Small ribosomal subunit protein uS2 from Thermoanaerobacter pseudethanolicus (strain ATCC 33223 / 39E) (Clostridium thermohydrosulfuricum).